Reading from the N-terminus, the 386-residue chain is 17-hydroxy-3-oxo-4-pregnene-20-carboxyl-CoA lyase (386 aa).

Catalysis depends on Tyr-292, which acts as the Proton acceptor. Tyr-342 (proton donor) is an active-site residue.

The protein belongs to the thiolase-like superfamily. As to quaternary structure, homodimer. Interacts with the ChsH1/ChsH2 hydratase via the DUF35 C-terminal region of ChsH2 (ChsH2-DUF35). The ChsH1-ChsH2-Ltp2 protein complex is composed of two protomers that form a heterohexameric structure through the Ltp2 dimerization interface.

The enzyme catalyses 17-hydroxy-3-oxochol-4-en-22-oyl-CoA = androst-4-ene-3,17-dione + propanoyl-CoA. It participates in steroid metabolism; cholesterol degradation. Involved in cholesterol side chain degradation. When associated with the ChsH1/ChsH2 hydratase, catalyzes the retroaldol cleavage of 17-hydroxy-3-oxo-4-pregnene-20-carboxyl-CoA (17-HOPC-CoA) produced by the hydratase, forming androst-4-ene-3,17-dione and propionyl-CoA. This Mycobacterium tuberculosis (strain ATCC 25618 / H37Rv) protein is 17-hydroxy-3-oxo-4-pregnene-20-carboxyl-CoA lyase.